The chain runs to 918 residues: Probable UDP-N-acetylglucosamine--peptide N-acetylglucosaminyltransferase SPINDLY (918 aa).

TPR repeat units follow at residues 34–66 (GKEA…SKNV), 67–99 (EAHI…DPHN), 101–132 (CALT…DPSY), 140–171 (ATVL…DPHY), 172–205 (APAC…SPTY), 207–238 (DAYC…NNMG), 239–271 (IALT…NWHY), 273–305 (DAMY…NPHC), 306–339 (AEAC…KPNF), 341–373 (QSLN…NPTY), and 374–407 (AEAY…DPDS). The tract at residues 408 to 918 (RNAGQNRLLA…LNCGDQCFRV (511 aa)) is catalytic region. Over residues 843–853 (QLHQQPNTSPQ) the composition is skewed to polar residues. The interval 843–877 (QLHQQPNTSPQKLVKDEPADDASGPEHGPASKDNP) is disordered.

The protein belongs to the glycosyltransferase 41 family. O-GlcNAc transferase subfamily.

It is found in the nucleus. The enzyme catalyses L-seryl-[protein] + UDP-N-acetyl-alpha-D-glucosamine = 3-O-(N-acetyl-beta-D-glucosaminyl)-L-seryl-[protein] + UDP + H(+). The catalysed reaction is L-threonyl-[protein] + UDP-N-acetyl-alpha-D-glucosamine = 3-O-(N-acetyl-beta-D-glucosaminyl)-L-threonyl-[protein] + UDP + H(+). It participates in protein modification; protein glycosylation. Probable O-linked N-acetylglucosamine transferase (OGT) involved in various processes such as gibberellin (GA) signaling pathway. OGTs catalyze the addition of nucleotide-activated sugars directly onto the polypeptide through O-glycosidic linkage with the hydroxyl of serine or threonine. Probably acts by adding O-linked sugars to yet unknown proteins. May function as a negative regulator of GA signal transduction during vernalization, inhibiting adventitious shoot elongation during vernalization. This is Probable UDP-N-acetylglucosamine--peptide N-acetylglucosaminyltransferase SPINDLY (SPY) from Eustoma exaltatum subsp. russellianum (Bluebells).